We begin with the raw amino-acid sequence, 351 residues long: Large ribosomal subunit protein uL3 (351 aa).

Disordered regions lie at residues 1–31 (MGHR…TPRT) and 246–271 (KGSR…GQLG).

This sequence belongs to the universal ribosomal protein uL3 family. In terms of assembly, part of the 50S ribosomal subunit. Forms a cluster with proteins L14 and L24e.

In terms of biological role, one of the primary rRNA binding proteins, it binds directly near the 3'-end of the 23S rRNA, where it nucleates assembly of the 50S subunit. The sequence is that of Large ribosomal subunit protein uL3 from Saccharolobus islandicus (strain Y.N.15.51 / Yellowstone #2) (Sulfolobus islandicus).